A 37-amino-acid chain; its full sequence is Large ribosomal subunit protein bL36c (37 aa).

It belongs to the bacterial ribosomal protein bL36 family.

Its subcellular location is the plastid. It localises to the chloroplast. This is Large ribosomal subunit protein bL36c from Tupiella akineta (Green alga).